A 4466-amino-acid chain; its full sequence is Dynein beta chain, ciliary (4466 aa).

The interval 1 to 1813 is stem; it reads MADVVDPRLE…YANICDAQFK (1813 aa). Residue 154–161 participates in ATP binding; that stretch reads AGQVKGKT. Coiled-coil stretches lie at residues 733–805, 1036–1056, 1306–1337, and 1443–1468; these read TVLE…WTKQ, TLDQ…EADE, WLEI…AWDA, and LLKS…MTSK. AAA stretches follow at residues 1814–2035, 2095–2316, 2422–2669, and 2767–3016; these read YSYE…VLVV, KVVK…VRFK, ELDP…VFQG, and TYNE…ERRY. Residues 1852–1859, 2133–2140, 2460–2467, and 2805–2812 each bind ATP; these read GPAGTGKT, GNAGTGKS, GNAGLGKS, and GVGGSGKQ. Coiled coils occupy residues 3033–3092, 3263–3325, and 3573–3642; these read SLLS…QVVG, EPKR…SRTI, and QERP…EEAK. The stalk stretch occupies residues 3033 to 3325; the sequence is SLLSMKSKEL…QEAEATSRTI (293 aa). 2 AAA regions span residues 3409 to 3636 and 3846 to 4072; these read LTDD…EISV and VRNF…VLYN.

Belongs to the dynein heavy chain family. Consists of at least two heavy chains (alpha and beta), three intermediate chains and several light chains.

Its subcellular location is the cell projection. The protein localises to the cilium. It localises to the flagellum. The protein resides in the cytoplasm. It is found in the cytoskeleton. Its subcellular location is the flagellum axoneme. Its function is as follows. Force generating protein of eukaryotic cilia and flagella. Produces force towards the minus ends of microtubules. Dynein has ATPase activity; the force-producing power stroke is thought to occur on release of ADP. In Tripneustes gratilla (Hawaian sea urchin), this protein is Dynein beta chain, ciliary.